A 1450-amino-acid chain; its full sequence is Phospholipase B1, membrane-associated (1450 aa).

The first 27 residues, 1–27 (MESWPGVSLVGLLLLLLLGQGPSQIHG), serve as a signal peptide directing secretion. The Extracellular segment spans residues 28–1422 (SSGENTSQPQ…KAKENSNTLY (1395 aa)). Asn32, Asn45, and Asn179 each carry an N-linked (GlcNAc...) asparagine glycan. 3 tandem repeats follow at residues 41–351 (RTLK…YRNS), 366–711 (MKEG…TKNS), and 712–1058 (NLGH…FRNS). The interval 41 to 1407 (RTLKNFSFPC…NPFLYTVRNS (1367 aa)) is 4 X 308-326 AA approximate repeats. Residues Ser404, Asp518, and His659 contribute to the active site. Asn699 is a glycosylation site (N-linked (GlcNAc...) asparagine). A compositionally biased stretch (polar residues) spans 708 to 720 (TKNSNLGHGTSMS). The tract at residues 708–734 (TKNSNLGHGTSMSCEEKAPSASPPTSV) is disordered. Asn787, Asn801, Asn844, Asn880, Asn926, Asn1059, Asn1226, Asn1280, Asn1383, and Asn1387 each carry an N-linked (GlcNAc...) asparagine glycan. The stretch at 1068 to 1407 (IENWGSDFLC…NPFLYTVRNS (340 aa)) is repeat 4. A necessary for membrane localization region spans residues 1408–1450 (QILLDKAKENSNTLYWAVPVAAVGGLVVGILGMMLWRTVRLVQ). A helical membrane pass occupies residues 1423-1443 (WAVPVAAVGGLVVGILGMMLW). At 1444–1450 (RTVRLVQ) the chain is on the cytoplasmic side.

This sequence belongs to the 'GDSL' lipolytic enzyme family. Phospholipase B1 subfamily. Post-translationally, undergoes proteolytic cleavage in the ileum. As to expression, expressed in the ileum mucosa, Paneth cells spermatocytes, spermatids and sperm (at protein level). Expressed in the ileum, jejunum, esophagus and testis.

It is found in the apical cell membrane. It carries out the reaction a 1,2-diacyl-sn-glycero-3-phosphocholine + H2O = a 1-acyl-sn-glycero-3-phosphocholine + a fatty acid + H(+). The enzyme catalyses a 1-O-alkyl-2-acyl-sn-glycero-3-phosphocholine + H2O = a 1-O-alkyl-sn-glycero-3-phosphocholine + a fatty acid + H(+). It catalyses the reaction a 1-acyl-sn-glycero-3-phosphocholine + H2O = sn-glycerol 3-phosphocholine + a fatty acid + H(+). The catalysed reaction is a triacylglycerol + H2O = a diacylglycerol + a fatty acid + H(+). It carries out the reaction 1,2-dihexadecanoyl-sn-glycero-3-phosphocholine + H2O = 1-hexadecanoyl-sn-glycero-3-phosphocholine + hexadecanoate + H(+). The enzyme catalyses 1-hexadecanoyl-2-(9Z-octadecenoyl)-sn-glycero-3-phosphocholine + H2O = 1-hexadecanoyl-sn-glycero-3-phosphocholine + (9Z)-octadecenoate + H(+). It catalyses the reaction 1,2-di-(9Z-octadecenoyl)-sn-glycero-3-phosphocholine + H2O = 1-(9Z-octadecenoyl)-sn-glycero-3-phosphocholine + (9Z)-octadecenoate + H(+). The catalysed reaction is 1-hexadecanoyl-2-(9Z,12Z-octadecadienoyl)-sn-glycero-3-phosphocholine + H2O = (9Z,12Z)-octadecadienoate + 1-hexadecanoyl-sn-glycero-3-phosphocholine + H(+). It carries out the reaction 1-hexadecanoyl-2-(9Z,12Z-octadecadienoyl)-sn-glycero-3-phosphocholine + H2O = 2-(9Z,12Z-octadecadienoyl)-sn-glycero-3-phosphocholine + hexadecanoate + H(+). The enzyme catalyses 1-hexadecanoyl-2-(9Z-octadecenoyl)-sn-glycero-3-phosphoethanolamine + H2O = 1-hexadecanoyl-sn-glycero-3-phosphoethanolamine + (9Z)-octadecenoate + H(+). It catalyses the reaction 1-hexadecanoyl-2-(9Z-octadecenoyl)-sn-glycero-3-phospho-(1'-sn-glycerol) + H2O = 1-hexadecanoyl-sn-glycero-3-phospho-(1'-sn-glycerol) + (9Z)-octadecenoate + H(+). The catalysed reaction is 1,2-dihexadecanoyl-sn-glycero-3-phosphocholine + 2 H2O = sn-glycerol 3-phosphocholine + 2 hexadecanoate + 2 H(+). It carries out the reaction 1-O-hexadecyl-2-(9Z)-octadecenoyl-sn-glycero-3-phosphocholine + H2O = 1-O-hexadecyl-sn-glycero-3-phosphocholine + (9Z)-octadecenoate + H(+). The enzyme catalyses 1-hexadecanoyl-sn-glycero-3-phosphocholine + H2O = sn-glycerol 3-phosphocholine + hexadecanoate + H(+). It catalyses the reaction 1,2,3-tri-(9Z-octadecenoyl)-glycerol + H2O = di-(9Z)-octadecenoylglycerol + (9Z)-octadecenoate + H(+). The catalysed reaction is 1-hexadecanoyl-2-(9Z)-octadecenoyl-3-octadecanoyl-sn-glycerol + H2O = 1-hexadecanoyl-2-(9Z-octadecenoyl)-sn-glycerol + octadecanoate + H(+). It carries out the reaction 1,3-dihexadecanoyl-2-(9Z-octadecenoyl)glycerol + H2O = 1,3-dihexadecanoylglycerol + (9Z)-octadecenoate + H(+). The enzyme catalyses 1,3-dihexadecanoyl-2-(9Z-octadecenoyl)glycerol + H2O = 1-hexadecanoyl-2-(9Z-octadecenoyl)-glycerol + hexadecanoate + H(+). It catalyses the reaction 1-hexadecanoyl-2-(9Z)-octadecenoyl-3-octadecanoyl-sn-glycerol + H2O = 1-hexadecanoyl-3-octadecanoyl-sn-glycerol + (9Z)-octadecenoate + H(+). The catalysed reaction is 1-hexadecanoyl-2-(9Z)-octadecenoyl-3-octadecanoyl-sn-glycerol + H2O = 2-(9Z-octadecenoyl)-3-octadecanoyl-sn-glycerol + hexadecanoate + H(+). It carries out the reaction 1-octadecanoyl-2-(9Z,12Z)-octadecadienoyl-sn-glycerol + H2O = 1-octadecanoyl-sn-glycerol + (9Z,12Z)-octadecadienoate + H(+). The enzyme catalyses 1,2-di-(9Z-octadecenoyl)-sn-glycerol + H2O = 1-(9Z-octadecenoyl)-sn-glycerol + (9Z)-octadecenoate + H(+). It catalyses the reaction 2,3-di-(9Z)-octadecenoyl-sn-glycerol + H2O = 3-(9Z-octadecenoyl)-sn-glycerol + (9Z)-octadecenoate + H(+). The catalysed reaction is 1,3-di-(9Z-octadecenoyl)-glycerol + H2O = 1-(9Z-octadecenoyl)-glycerol + (9Z)-octadecenoate + H(+). It carries out the reaction 1-(9Z-octadecenoyl)-glycerol + H2O = glycerol + (9Z)-octadecenoate + H(+). The enzyme catalyses 2-(9Z-octadecenoyl)-glycerol + H2O = glycerol + (9Z)-octadecenoate + H(+). With respect to regulation, up-regulated by bile acids such as deoxycholate. Inhibited by diisopropyl fluorophosphate. In terms of biological role, calcium-independent membrane-associated phospholipase that catalyzes complete diacylation of phospholipids by hydrolyzing both sn-1 and sn-2 fatty acyl chains attached to the glycerol backbone (phospholipase B activity). Has dual phospholipase and lysophospholipase activities toward diacylphospholipids. Preferentially cleaves sn-2 ester bonds over sn-1 bonds. Acts as a lipase toward glycerolipid substrates. Hydrolyzes fatty acyl chains of diacylglycerols with preference for the sn-2 position and of triacylglycerols with not positional selectivity. May also hydrolyze long chain retinyl esters such as retinyl palmitate. May contribute to digestion of dietary phospholipids, glycerolipids and retinoids, facilitating lipid absorption at the brush border. The polypeptide is Phospholipase B1, membrane-associated (Plb1) (Rattus norvegicus (Rat)).